The following is a 214-amino-acid chain: Probable transaldolase (214 aa).

The active-site Schiff-base intermediate with substrate is the lysine 83.

The protein belongs to the transaldolase family. Type 3B subfamily.

It localises to the cytoplasm. It carries out the reaction D-sedoheptulose 7-phosphate + D-glyceraldehyde 3-phosphate = D-erythrose 4-phosphate + beta-D-fructose 6-phosphate. It functions in the pathway carbohydrate degradation; pentose phosphate pathway; D-glyceraldehyde 3-phosphate and beta-D-fructose 6-phosphate from D-ribose 5-phosphate and D-xylulose 5-phosphate (non-oxidative stage): step 2/3. Its function is as follows. Transaldolase is important for the balance of metabolites in the pentose-phosphate pathway. In Clostridium botulinum (strain Alaska E43 / Type E3), this protein is Probable transaldolase.